A 257-amino-acid chain; its full sequence is MSDLKKAAQRAIELMDLTTLNDDDTAEKVIELCKKAVTPAGHTAAICIYPRFIPIARKTLIELDAEDIQIATVTNFPHGNDDIAIAVLETRAAVAYGADEVDVVFPYRALMEGDETVGFELVKACKEACGDDVLLKVIIESGELKDPALIRKASEISIDAGADFIKTSTGKVPVNATLEAAEIMLTVIAEKNRAVGFKPAGGVRDAAAAAEFLGTAARILGEDWVTPRTFRFGASSLLSSLLHTLELADAPKGAQGY.

Residue Asp102 is the Proton donor/acceptor of the active site. Lys166 functions as the Schiff-base intermediate with acetaldehyde in the catalytic mechanism. Lys198 acts as the Proton donor/acceptor in catalysis.

This sequence belongs to the DeoC/FbaB aldolase family. DeoC type 2 subfamily.

It is found in the cytoplasm. The catalysed reaction is 2-deoxy-D-ribose 5-phosphate = D-glyceraldehyde 3-phosphate + acetaldehyde. It participates in carbohydrate degradation; 2-deoxy-D-ribose 1-phosphate degradation; D-glyceraldehyde 3-phosphate and acetaldehyde from 2-deoxy-alpha-D-ribose 1-phosphate: step 2/2. In terms of biological role, catalyzes a reversible aldol reaction between acetaldehyde and D-glyceraldehyde 3-phosphate to generate 2-deoxy-D-ribose 5-phosphate. The sequence is that of Deoxyribose-phosphate aldolase from Shewanella amazonensis (strain ATCC BAA-1098 / SB2B).